The following is a 68-amino-acid chain: Negative regulator of P-body association (68 aa).

The interval 1–68 (MGDQPCASGR…LKSHPPPPEK (68 aa)) is disordered.

As to quaternary structure, interacts with mRNA decapping proteins DCP1A, DCP2 and EDC4.

It localises to the cytoplasm. The protein resides in the P-body. Functionally, promotes dispersal of P-body components and is likely to play a role in the mRNA decapping process. This chain is Negative regulator of P-body association, found in Homo sapiens (Human).